Consider the following 122-residue polypeptide: Large ribosomal subunit protein uL14c (122 aa).

It belongs to the universal ribosomal protein uL14 family. Part of the 50S ribosomal subunit.

Its subcellular location is the plastid. It is found in the chloroplast. In terms of biological role, binds to 23S rRNA. The sequence is that of Large ribosomal subunit protein uL14c from Fagopyrum esculentum subsp. ancestrale (Wild buckwheat).